Here is a 312-residue protein sequence, read N- to C-terminus: MNWTELSIIINHEAVELATNILENHGSNGVVIEDSDDLINQPEDKYGEIYALKKEDYPDKGVRLKAYFNEMTYDDKLRQQIKDELLNLDELDQHNIQFSEQIIAETDWENEWKNYFHPFRASKKFTIVPSWETYAKEADEELCIELDPGMAFGTGDHPTTSMCLKAIETYVLPQHSVIDVGTGSGILSIASHLIGVKRIKALDIDEMAVSVAKENFRRNHCETLIEAVPGNLLKDETEKFDIVIANILAHIIDEMIEDAYNTLNEGGYFITSGIIKEKYEGIQSHMERVGFKIISEQHDNGWVCLVGQKVSE.

S-adenosyl-L-methionine-binding residues include Thr160, Gly181, Asp203, and Asn246.

It belongs to the methyltransferase superfamily. PrmA family.

It is found in the cytoplasm. The catalysed reaction is L-lysyl-[protein] + 3 S-adenosyl-L-methionine = N(6),N(6),N(6)-trimethyl-L-lysyl-[protein] + 3 S-adenosyl-L-homocysteine + 3 H(+). Functionally, methylates ribosomal protein L11. The polypeptide is Ribosomal protein L11 methyltransferase (Staphylococcus aureus (strain JH1)).